A 513-amino-acid chain; its full sequence is uncharacterized protein (513 aa).

5 consecutive transmembrane segments (helical) span residues 262-282, 304-324, 341-361, 382-402, and 429-449; these read FAIF…FWQL, YMFL…ITYH, EPIP…FEAL, LVIG…VIIV, and MFLA…ILVL. The segment at 489-513 is disordered; it reads PGTYSRGNGQKGAKREDPKDEENNI. Basic and acidic residues predominate over residues 501-513; the sequence is AKREDPKDEENNI.

Belongs to the GerABKA family.

It localises to the cell membrane. This is an uncharacterized protein from Bacillus subtilis (strain 168).